The sequence spans 769 residues: Polyribonucleotide nucleotidyltransferase (769 aa).

Asp-490 and Asp-496 together coordinate Mg(2+). Residues 557-616 (PKIDTIMIPVDKIKVVIGKGGEQIDKIIAETGVKIDIDDEGLCSIFSSDQSAIDRAKEII) enclose the KH domain. Residues 626–694 (GEVYEAKVVR…DKGRVDASMR (69 aa)) form the S1 motif domain. Residues 700 to 734 (PEGYVEPERKPRERRDNKDRRNGNGFDRRNNDRNN) show a composition bias toward basic and acidic residues. The interval 700-769 (PEGYVEPERK…FPELSTKKPE (70 aa)) is disordered. Low complexity predominate over residues 736-746 (NNHNNNSGNHS). Residues 747–769 (FELRERKSHVDHEFPELSTKKPE) show a composition bias toward basic and acidic residues.

Belongs to the polyribonucleotide nucleotidyltransferase family. It depends on Mg(2+) as a cofactor.

Its subcellular location is the cytoplasm. It carries out the reaction RNA(n+1) + phosphate = RNA(n) + a ribonucleoside 5'-diphosphate. In terms of biological role, involved in mRNA degradation. Catalyzes the phosphorolysis of single-stranded polyribonucleotides processively in the 3'- to 5'-direction. The polypeptide is Polyribonucleotide nucleotidyltransferase (Lactococcus lactis subsp. cremoris (strain SK11)).